The sequence spans 332 residues: DNA-directed RNA polymerase subunit alpha (332 aa).

The interval 1–227 (MKKFAETPFL…VMYSQMSVFN (227 aa)) is alpha N-terminal domain (alpha-NTD). The segment at 248-332 (KELVIRIDDL…LRRKLEQLKA (85 aa)) is alpha C-terminal domain (alpha-CTD).

It belongs to the RNA polymerase alpha chain family. Homodimer. The RNAP catalytic core consists of 2 alpha, 1 beta, 1 beta' and 1 omega subunit. When a sigma factor is associated with the core the holoenzyme is formed, which can initiate transcription.

The catalysed reaction is RNA(n) + a ribonucleoside 5'-triphosphate = RNA(n+1) + diphosphate. In terms of biological role, DNA-dependent RNA polymerase catalyzes the transcription of DNA into RNA using the four ribonucleoside triphosphates as substrates. This chain is DNA-directed RNA polymerase subunit alpha, found in Aliarcobacter butzleri (strain RM4018) (Arcobacter butzleri).